Consider the following 881-residue polypeptide: Valine--tRNA ligase (881 aa).

The 'HIGH' region motif lies at 76 to 86 (PTVSGSLHIGH). Residues 493–526 (DSPILPDESQLPVDPSSQAPEGYTEDQRGKPGGF) are disordered. Positions 608 to 612 (KMSKS) match the 'KMSKS' region motif. Residue Lys611 coordinates ATP.

The protein belongs to the class-I aminoacyl-tRNA synthetase family. ValS type 2 subfamily. Monomer.

Its subcellular location is the cytoplasm. The catalysed reaction is tRNA(Val) + L-valine + ATP = L-valyl-tRNA(Val) + AMP + diphosphate. Functionally, catalyzes the attachment of valine to tRNA(Val). As ValRS can inadvertently accommodate and process structurally similar amino acids such as threonine, to avoid such errors, it has a 'posttransfer' editing activity that hydrolyzes mischarged Thr-tRNA(Val) in a tRNA-dependent manner. The sequence is that of Valine--tRNA ligase from Thermobifida fusca (strain YX).